Here is a 201-residue protein sequence, read N- to C-terminus: 3-isopropylmalate dehydratase small subunit (201 aa).

The protein belongs to the LeuD family. LeuD type 1 subfamily. In terms of assembly, heterodimer of LeuC and LeuD.

The enzyme catalyses (2R,3S)-3-isopropylmalate = (2S)-2-isopropylmalate. The protein operates within amino-acid biosynthesis; L-leucine biosynthesis; L-leucine from 3-methyl-2-oxobutanoate: step 2/4. Functionally, catalyzes the isomerization between 2-isopropylmalate and 3-isopropylmalate, via the formation of 2-isopropylmaleate. The polypeptide is 3-isopropylmalate dehydratase small subunit (Afipia carboxidovorans (strain ATCC 49405 / DSM 1227 / KCTC 32145 / OM5) (Oligotropha carboxidovorans)).